We begin with the raw amino-acid sequence, 415 residues long: NADH-quinone oxidoreductase subunit D (415 aa).

The protein belongs to the complex I 49 kDa subunit family. NDH-1 is composed of 14 different subunits. Subunits NuoB, C, D, E, F, and G constitute the peripheral sector of the complex.

The protein localises to the cell inner membrane. The catalysed reaction is a quinone + NADH + 5 H(+)(in) = a quinol + NAD(+) + 4 H(+)(out). NDH-1 shuttles electrons from NADH, via FMN and iron-sulfur (Fe-S) centers, to quinones in the respiratory chain. The immediate electron acceptor for the enzyme in this species is believed to be ubiquinone. Couples the redox reaction to proton translocation (for every two electrons transferred, four hydrogen ions are translocated across the cytoplasmic membrane), and thus conserves the redox energy in a proton gradient. In Myxococcus xanthus (strain DK1622), this protein is NADH-quinone oxidoreductase subunit D.